The sequence spans 69 residues: Large ribosomal subunit protein uL29 (69 aa).

It belongs to the universal ribosomal protein uL29 family.

This is Large ribosomal subunit protein uL29 from Rhodospirillum centenum (strain ATCC 51521 / SW).